Reading from the N-terminus, the 97-residue chain is RNA-binding protein Hfq (97 aa).

The 61-residue stretch at 10 to 70 (DPFLNALRKE…ISTIVPARSV (61 aa)) folds into the Sm domain. The disordered stretch occupies residues 75-97 (ENRPQAAPASTLVQVETVQQPAE). Polar residues predominate over residues 85–97 (TLVQVETVQQPAE).

This sequence belongs to the Hfq family. Homohexamer.

RNA chaperone that binds small regulatory RNA (sRNAs) and mRNAs to facilitate mRNA translational regulation in response to envelope stress, environmental stress and changes in metabolite concentrations. Also binds with high specificity to tRNAs. The sequence is that of RNA-binding protein Hfq from Neisseria meningitidis serogroup C / serotype 2a (strain ATCC 700532 / DSM 15464 / FAM18).